The sequence spans 260 residues: Thrombin-like enzyme bhalternin (260 aa).

Positions methionine 1–alanine 18 are cleaved as a signal peptide. Residues glutamine 19 to leucine 24 constitute a propeptide that is removed on maturation. Positions valine 25–alanine 251 constitute a Peptidase S1 domain. 5 disulfides stabilise this stretch: cysteine 31-cysteine 165, cysteine 50-cysteine 66, cysteine 144-cysteine 212, cysteine 176-cysteine 191, and cysteine 202-cysteine 227. Asparagine 44 is a glycosylation site (N-linked (GlcNAc...) asparagine). Residue asparagine 81 is glycosylated (N-linked (GlcNAc...) asparagine).

It belongs to the peptidase S1 family. Snake venom subfamily. As to quaternary structure, monomer. As to expression, expressed by the venom gland.

It is found in the secreted. With respect to regulation, inhibited by benzamidine and partially inhibited by EDTA. In terms of biological role, thrombin-like snake venom serine protease that induces blood clotting in vitro, defibrinogenation in vivo (by intraperitoneal injection into mice), albuminolytic and fibrinogenolytic activities. Preferentially cleaves the alpha chain of fibrinogen (FGA). Causes hemolysis in the heart, causes apparent hyperemia and lymphocytic interstitial pneumonitis in the lung, causes necrosis and inflammatory infiltrate in the liver, and causes glomerular congestion in the kidney. Also provokes a drastic myonecrosis. This chain is Thrombin-like enzyme bhalternin, found in Bothrops alternatus (Urutu).